The primary structure comprises 222 residues: MGSGSRERIVEVFDALDAELDRLDEVSFEVLTTPERLRSLERLECLVRRLPAVGHALINQLDAQASEEELGGTLCCALANRLRITKPDAARRIADAADLGPRRALTGEPLAPQLTATATAQRQGLIGEAHVKVIRALFRPPARRGGCVHPPGRRSRPGRQSRSISSRRAGPLRPAGHGLATPRRRPHRHRTRPQTRHHPEQPAIRRHVTAKWLPDPPSAGHL.

The disordered stretch occupies residues 142–222 (ARRGGCVHPP…LPDPPSAGHL (81 aa)). The segment covering 160–169 (QSRSISSRRA) has biased composition (low complexity). The segment covering 182–196 (PRRRPHRHRTRPQTR) has biased composition (basic residues).

This sequence belongs to the Rv1128c/1148c/1588c/1702c/1945/3466 family.

This is an uncharacterized protein from Mycobacterium tuberculosis (strain ATCC 25618 / H37Rv).